The primary structure comprises 296 residues: Glucokinase (296 aa).

Belongs to the ROK (NagC/XylR) family. As to quaternary structure, homodimer. Requires a divalent metal cation as cofactor.

It carries out the reaction D-glucose + ATP = D-glucose 6-phosphate + ADP + H(+). Catalyzes the phosphorylation of D-glucose to D-glucose 6-phosphate using ATP as the phosphate donor. Has a broad hexose specificity, and in addition to glucose, which shows the highest catalytic efficiency, it can also phosphorylate fructose, mannose, galactose and sorbitol. Can also use CTP, GTP or UTP as phosphoryl donor. The protein is Glucokinase of Pyrobaculum calidifontis (strain DSM 21063 / JCM 11548 / VA1).